Consider the following 339-residue polypeptide: NmrA-like family domain-containing oxidoreductase cpsB (339 aa).

An NADP(+)-binding site is contributed by Lys142.

Belongs to the NmrA-type oxidoreductase family.

The catalysed reaction is didehydrocampesine A + 2 AH2 = campesine A + 2 A. Its pathway is alkaloid biosynthesis. Functionally, oxidoreductase; part of the gene cluster that mediates the biosynthesis of campesine G, a dimeric indole piperazine alkaloid that shows good insecticidal activity Galleria mellonella. Within the pathway, cpsB reduces the unstable (S,S)-trypyl-valyl dihydropiperazine (didehydrocampesine A) intermediate to (S, S)-trypyl-valyl-piperazine (campesine A) using two equivalents of NAD(P)H. The non-canonical non-ribosomal peptide synthetase cpsA catalyzes the first steps of the pathway by producing L-tryptophanal and L-valinal from their respective amino-acids. These products condensate spontaneously to form trypyl-valyl pyrazine also known as didehydrocampesine A. The NmrA-like family domain-containing oxidoreductase cpsB is the next enzyme in cps pathway and reduces the unstable didehydrocampesine A to campesine A. The methyltransferase cpsF and the acetyltransferase cpsE both recognize N13 of piperazine ring to carry out methylation and acetylation of campesine A to produce campesine C and B, respectively. The cytochrome P450 monooxygenase cpsD then acts as a dimerase that catalyzes oxidative heterocoupling between campesine B and C to produce heterodimers with unexpected 6/5/6/6/6/6/5/6 eight-ring scaffold called campesine D. Finally,the cytochrome P450 monooxygenase cpsC is a regioselective dehydrogenase that catalyzes dehydrogenation reaction towards C2-N1 to produce campesine G. In Aspergillus campestris (strain IBT 28561), this protein is NmrA-like family domain-containing oxidoreductase cpsB.